Here is a 36-residue protein sequence, read N- to C-terminus: Photosystem I reaction center subunit VIII (36 aa).

The helical transmembrane segment at Phe10–Tyr29 threads the bilayer.

Belongs to the PsaI family.

It localises to the plastid. The protein localises to the chloroplast thylakoid membrane. Functionally, may help in the organization of the PsaL subunit. This chain is Photosystem I reaction center subunit VIII, found in Oryza nivara (Indian wild rice).